We begin with the raw amino-acid sequence, 501 residues long: Solute carrier family 2, facilitated glucose transporter member 5 (501 aa).

An N-acetylmethionine modification is found at Met1. Over 1–18 (MEQQDQSMKEGRLTLVLA) the chain is Cytoplasmic. Residues 19-39 (LATLIAAFGSSFQYGYNVAAV) traverse the membrane as a helical segment. Position 32 (Tyr32) interacts with D-fructose. Over 40-68 (NSPALLMQQFYNETYYGRTGEFMEDFPLT) the chain is Extracellular. Asn51 carries an N-linked (GlcNAc...) asparagine glycan. A helical membrane pass occupies residues 69-91 (LLWSVTVSMFPFGGFIGSLLVGP). Residues 92 to 98 (LVNKFGR) lie on the Cytoplasmic side of the membrane. The helical transmembrane segment at 99 to 119 (KGALLFNNIFSIVPAILMGCS) threads the bilayer. The Extracellular portion of the chain corresponds to 120–126 (RVAKSFE). The chain crosses the membrane as a helical span at residues 127–149 (LIIISRLLVGICAGVSSNVVPMY). Over 150 to 161 (LGELAPKNLRGA) the chain is Cytoplasmic. The helical transmembrane segment at 162-182 (LGVVPQLFITVGILVAQIFGL) threads the bilayer. Gln167 is a binding site for D-fructose. Over 183 to 192 (RNLLANVDGW) the chain is Extracellular. The helical transmembrane segment at 193-213 (PILLGLTGVPAALQLVLLPFF) threads the bilayer. Topologically, residues 214-277 (PESPRYLLIQ…LFRMRSLRWQ (64 aa)) are cytoplasmic. A helical transmembrane segment spans residues 278 to 298 (LLSIIVLMGGQQLSGVNAIYY). D-fructose-binding positions include Gln288 and 296-298 (IYY). Residues 299 to 313 (YADQIYLSAGVPKEH) lie on the Extracellular side of the membrane. A helical transmembrane segment spans residues 314–334 (VQFVTAGTGAVNVVMTFCAVF). Over 335–342 (VVELLGRR) the chain is Cytoplasmic. A helical membrane pass occupies residues 343–363 (LLLLLGFSICLVACCVLTAAL). The Extracellular segment spans residues 364–371 (ALQDTVSW). A helical membrane pass occupies residues 372 to 394 (MPYISIVCVISYVIGHALGPSPI). His387 lines the D-fructose pocket. At 395–412 (PALLITEIFLQSSRPSAF) the chain is on the cytoplasmic side. A helical transmembrane segment spans residues 413-433 (MVGGSVHWLSNFTVGLIFPFI). 419-420 (HW) contributes to the D-fructose binding site. Residues 434–439 (QEGLGP) are Extracellular-facing. Residues 440–460 (YSFIVFAVICLLTTIYIFLIV) form a helical membrane-spanning segment. The Cytoplasmic portion of the chain corresponds to 461–501 (PETKAKTFIEINQIFTKMNKVSEVYPEKEELKELPPVTLEQ).

The protein belongs to the major facilitator superfamily. Sugar transporter (TC 2.A.1.1) family. Glucose transporter subfamily.

The protein localises to the apical cell membrane. It is found in the cell membrane. Its subcellular location is the sarcolemma. It carries out the reaction D-fructose(out) = D-fructose(in). Functions as a fructose transporter that has only low activity with other monosaccharides. Can mediate the uptake of deoxyglucose, but with low efficiency. Essential for fructose uptake in the small intestine. Plays a role in the regulation of salt uptake and blood pressure in response to dietary fructose. Required for the development of high blood pressure in response to high dietary fructose intake. The chain is Solute carrier family 2, facilitated glucose transporter member 5 from Pongo abelii (Sumatran orangutan).